The sequence spans 366 residues: Sperm equatorial segment protein 1 (366 aa).

The signal sequence occupies residues 1–18 (MKFLVLLVALLLWPSSLP). Asn129 is a glycosylation site (N-linked (GlcNAc...) asparagine). The segment at 139 to 204 (PFIEKDEPEP…EDVPQLSGDN (66 aa)) is disordered. A compositionally biased stretch (acidic residues) spans 144–157 (DEPEPEPEPEPEPE). The span at 165–189 (APTQVPSVTEPSQDVTSLSGSTDLG) shows a compositional bias: polar residues.

Belongs to the SPESP1 family. Glycosylated. In testis there are two predominant forms of 77- and 67-kDa and a form of 47-kDa, whereas in epididymal sperm from caput, corpus, and cauda there are two forms of 47- and 43-kDa. Testis forms contain complex carbohydrate residues. Epididymal sperm forms are N-glycosylated. Then undergoes significant glycosylation in the testis and that the majority of these glycoconjugates are removed by the time sperm reach the caput epididymis.

The protein resides in the cytoplasmic vesicle. It is found in the secretory vesicle. Its subcellular location is the acrosome. In terms of biological role, involved in fertilization ability of sperm. The chain is Sperm equatorial segment protein 1 from Bos taurus (Bovine).